The sequence spans 277 residues: Raffinose operon transcriptional regulatory protein RafR (277 aa).

One can recognise an HTH araC/xylS-type domain in the interval 176-274; that stretch reads NLAVSYLQEN…GASPSYYRKS (99 aa). DNA-binding regions (H-T-H motif) lie at residues 193–214 and 241–264; these read MDLCHYLNLSRSYLYTLFKTHA and VQSIANMVGYKDSFTFSKAFKRYS.

Involved in the regulation of the raffinose-operon. This is Raffinose operon transcriptional regulatory protein RafR (rafR) from Pediococcus pentosaceus.